The sequence spans 278 residues: Neuronal membrane glycoprotein M6-a (278 aa).

N-acetylmethionine is present on Met-1. Over 1–22 the chain is Cytoplasmic; it reads MEENMEEGQTQKGCFECCIKCL. The chain crosses the membrane as a helical span at residues 23-43; it reads GGIPYASLIATILLYAGVALF. Over 44–84 the chain is Extracellular; sequence CGCGHEALSGTVNILQTYFEMARTAGDTLDVFTMIDIFKYV. A helical membrane pass occupies residues 85–105; it reads IYGIAAAFFVYGILLMVEGFF. Residues 106 to 127 are Cytoplasmic-facing; that stretch reads TTGAIKDLYGDFKITTCGRCVS. The helical transmembrane segment at 128-148 threads the bilayer; sequence AWFIMLTYLFMLAWLGVTAFT. Residues 149 to 213 lie on the Extracellular side of the membrane; the sequence is SLPVYMYFNL…STELNMTFHL (65 aa). A glycan (N-linked (GlcNAc...) asparagine) is linked at Asn-164. An intrachain disulfide couples Cys-174 to Cys-192. N-linked (GlcNAc...) asparagine glycosylation occurs at Asn-208. The chain crosses the membrane as a helical span at residues 214 to 234; the sequence is FIVALAGAGAAVIAMVHYLMV. At 235 to 278 the chain is on the cytoplasmic side; that stretch reads LSANWAYVKDACRMQKYEDIKSKEEQELHDIHSTRSKERLNAYT. Ser-256 bears the Phosphoserine mark. A Phosphothreonine modification is found at Thr-278.

The protein belongs to the myelin proteolipid protein family. As to quaternary structure, interacts with OPRM1. Interacts with palmitoyltransferase ZDHHC17/HIP14; the interaction leads to palmitoylation of GPM6A. In terms of processing, N-glycosylated. Post-translationally, palmitoylated by ZDHHC17/HIP14.

It localises to the cell membrane. It is found in the cell projection. The protein localises to the axon. Its subcellular location is the growth cone. The protein resides in the dendritic spine. It localises to the filopodium. It is found in the neuron projection. Involved in neuronal differentiation, including differentiation and migration of neuronal stem cells. Plays a role in neuronal plasticity and is involved in neurite and filopodia outgrowth, filopodia motility and probably synapse formation. GPM6A-induced filopodia formation involves mitogen-activated protein kinase (MAPK) and Src signaling pathways. May be involved in neuronal NGF-dependent Ca(2+) influx. May be involved in regulation of endocytosis and intracellular trafficking of G-protein-coupled receptors (GPCRs); may enhance internalization and recycling of mu-type opioid receptor. The protein is Neuronal membrane glycoprotein M6-a (GPM6A) of Bos taurus (Bovine).